The chain runs to 487 residues: b(0,+)-type amino acid transporter 1 (487 aa).

Residues 1–15 (MGDTGLRKRREDEKS) are compositionally biased toward basic and acidic residues. A disordered region spans residues 1 to 22 (MGDTGLRKRREDEKSIQSQEPK). The Cytoplasmic portion of the chain corresponds to 1-31 (MGDTGLRKRREDEKSIQSQEPKTTSLQKELG). Phosphoserine is present on S18. The chain crosses the membrane as a helical span at residues 32–55 (LISGISIIVGTIIGSGIFVSPKSV). L-arginine is bound at residue 43–47 (IIGSG). The Extracellular segment spans residues 56-62 (LSNTEAV). The chain crosses the membrane as a helical span at residues 63–84 (GPCLIIWAACGVLATLGALCFA). Over 85–110 (ELGTMITKSGGEYPYLMEAYGPIPAY) the chain is Cytoplasmic. The chain crosses the membrane as a helical span at residues 111 to 137 (LFSWASLIVIKPTSFAIICLSFSEYVC). The Extracellular segment spans residues 138-147 (APFYVGCKPP). The next 2 helical transmembrane spans lie at 148–169 (QIVVKCLAAAAILFISTVNSLS) and 170–193 (VRLGSYVQNIFTAAKLVIVAIIII). Residues 194–217 (SGLVLLAQGNTKNFDNSFEGAQLS) are Extracellular-facing. A helical transmembrane segment spans residues 218-238 (VGAISLAFYNGLWAYDGWNQL). D233 provides a ligand contact to L-arginine. The Cytoplasmic segment spans residues 239–251 (NYITEELRNPYRN). A helical membrane pass occupies residues 252–274 (LPLAIIIGIPLVTACYILMNVSY). Topologically, residues 275 to 302 (FTVMTATELLQSQAVAVTFGDRVLYPAS) are extracellular. The helical transmembrane segment at 303 to 325 (WIVPLFVAFSTIGAANGTCFTAG) threads the bilayer. Over 326-351 (RLIYVAGREGHMLKVLSYISVRRLTP) the chain is Cytoplasmic. 2 helical membrane passes run 352 to 370 (APAIIFYGIIATIYIIPGD) and 371 to 391 (INSLVNYFSFAAWLFYGLTIL). Topologically, residues 392–410 (GLIVMRFTRKELERPIKVP) are cytoplasmic. Residues 411-431 (VVIPVLMTLISVFLVLAPIIS) traverse the membrane as a helical segment. Residues 432-434 (KPT) lie on the Extracellular side of the membrane. Residues 435–450 (WEYLYCVLFILSGLLF) form a helical membrane-spanning segment. At 451–487 (YFLFVHYKFGWAQKISKPITMHLQMLMEVVPPEEDPE) the chain is on the cytoplasmic side.

This sequence belongs to the amino acid-polyamine-organocation (APC) superfamily. As to quaternary structure, disulfide-linked heterodimer composed of the catalytic light chain subunit SLC7A9 and the heavy chain subunit SLC3A1. The heterodimer is the minimal functional unit. Assembles in heterotetramers (dimers of heterodimers) and higher order oligomers; the oligomerization is mediated by SLC3A1 likely to prevent degradation and facilitate heteromer trafficking to the plasma membrane. Interacts with CAV1. As to expression, expressed in the brush border membrane in the kidney (at protein level). Kidney, small intestine, liver and placenta.

It is found in the apical cell membrane. It localises to the cell membrane. The catalysed reaction is L-leucine(out) + L-arginine(in) = L-leucine(in) + L-arginine(out). The enzyme catalyses L-histidine(out) + L-arginine(in) = L-histidine(in) + L-arginine(out). It carries out the reaction L-arginine(in) + L-phenylalanine(out) = L-arginine(out) + L-phenylalanine(in). It catalyses the reaction L-cysteine(out) + L-arginine(in) = L-cysteine(in) + L-arginine(out). The catalysed reaction is L-cystine(out) + L-arginine(in) = L-cystine(in) + L-arginine(out). The enzyme catalyses L-lysine(out) + L-arginine(in) = L-lysine(in) + L-arginine(out). Associates with SLC3A1 to form a functional transporter complex that mediates the electrogenic exchange between cationic amino acids and neutral amino acids, with a stoichiometry of 1:1. Has system b(0,+)-like activity with high affinity for extracellular cationic amino acids and L-cystine and lower affinity for intracellular neutral amino acids. Substrate exchange is driven by high concentration of intracellular neutral amino acids and the intracellular reduction of L-cystine to L-cysteine. Required for reabsorption of L-cystine and dibasic amino acids across the brush border membrane in renal proximal tubules. This chain is b(0,+)-type amino acid transporter 1, found in Homo sapiens (Human).